The following is a 1597-amino-acid chain: THO complex subunit 2 (1597 aa).

Disordered regions lie at residues 1250–1274 (KSQR…SKDR) and 1384–1597 (EPYP…RYQR). Positions 1419–1430 (GSSNYRGPSNDR) are enriched in polar residues. Composition is skewed to basic and acidic residues over residues 1458 to 1490 (TYND…EYKK), 1500 to 1512 (FPEK…KDSS), 1522 to 1545 (YKRD…ETIR), and 1554 to 1567 (RNTR…RANE). Residues 1568 to 1582 (NQRYNGNRKSNTQAL) show a composition bias toward polar residues.

The protein belongs to the THOC2 family. Component of the THO complex, which is composed of HPR1, MFT1, THO2 and THP2. Together with SUB2, TEX1 and YRA1, THO forms the transcription/export (TREX) complex. THO associates with DNA and RNA in vitro.

Its subcellular location is the nucleus. Functionally, component the THO subcomplex of the TREX complex, which operates in coupling transcription elongation to mRNA export. The THO complex is recruited to transcribed genes and moves along the gene with the elongating polymerase during transcription. THO is important for stabilizing nascent RNA in the RNA polymerase II elongation complex by preventing formation of DNA:RNA hybrids behind the elongating polymerase. It functions in cotranscriptional formation of an export-competent messenger ribonucleoprotein particle (mRNP) by facilitating the loading of ATP-dependent RNA helicase SUB2 and the mRNA export factor YRA1 along the nascent mRNA. In Saccharomyces cerevisiae (strain ATCC 204508 / S288c) (Baker's yeast), this protein is THO complex subunit 2 (THO2).